The chain runs to 404 residues: Propionate kinase (404 aa).

It belongs to the acetokinase family. PduW subfamily.

Its subcellular location is the cytoplasm. The enzyme catalyses propanoate + ATP = propanoyl phosphate + ADP. It participates in polyol metabolism; 1,2-propanediol degradation. Works with phosphate acetyltransferase (pta) to capture exogenous propionate and regenerate propionyl-CoA during degradation of 1,2-propanediol (1,2-PD). In Klebsiella pneumoniae (strain 342), this protein is Propionate kinase.